Here is a 674-residue protein sequence, read N- to C-terminus: Methionine--tRNA ligase (674 aa).

Positions 11-21 (PYANGDLHLGH) match the 'HIGH' region motif. Zn(2+) is bound by residues cysteine 142, cysteine 145, cysteine 155, and cysteine 158. A 'KMSKS' region motif is present at residues 330 to 334 (KMSKS). Lysine 333 contacts ATP. The 101-residue stretch at 574–674 (DFMKVDLRIA…EGAQPGMRVK (101 aa)) folds into the tRNA-binding domain.

Belongs to the class-I aminoacyl-tRNA synthetase family. MetG type 1 subfamily. Homodimer. The cofactor is Zn(2+).

Its subcellular location is the cytoplasm. It catalyses the reaction tRNA(Met) + L-methionine + ATP = L-methionyl-tRNA(Met) + AMP + diphosphate. Functionally, is required not only for elongation of protein synthesis but also for the initiation of all mRNA translation through initiator tRNA(fMet) aminoacylation. The chain is Methionine--tRNA ligase from Francisella tularensis subsp. tularensis (strain FSC 198).